The sequence spans 63 residues: Large ribosomal subunit protein uL29 (63 aa).

The protein belongs to the universal ribosomal protein uL29 family.

The sequence is that of Large ribosomal subunit protein uL29 from Shewanella loihica (strain ATCC BAA-1088 / PV-4).